We begin with the raw amino-acid sequence, 240 residues long: Uridylate kinase (240 aa).

13-16 contacts ATP; that stretch reads KISG. Glycine 55 is a binding site for UMP. Glycine 56 and arginine 60 together coordinate ATP. UMP-binding positions include aspartate 75 and 136 to 143; that span reads TGNPFFTT. Residues threonine 163, glutamine 164, tyrosine 169, and aspartate 172 each contribute to the ATP site.

Belongs to the UMP kinase family. Homohexamer.

The protein resides in the cytoplasm. The enzyme catalyses UMP + ATP = UDP + ADP. It functions in the pathway pyrimidine metabolism; CTP biosynthesis via de novo pathway; UDP from UMP (UMPK route): step 1/1. Inhibited by UTP. Catalyzes the reversible phosphorylation of UMP to UDP. In Paramagnetospirillum magneticum (strain ATCC 700264 / AMB-1) (Magnetospirillum magneticum), this protein is Uridylate kinase.